A 184-amino-acid chain; its full sequence is NADH-quinone oxidoreductase subunit B (184 aa).

Positions 37, 38, 103, and 132 each coordinate [4Fe-4S] cluster. A disordered region spans residues 164–184; the sequence is HEREEAAKHALPTHSMKGLLR.

This sequence belongs to the complex I 20 kDa subunit family. NDH-1 is composed of 14 different subunits. Subunits NuoB, C, D, E, F, and G constitute the peripheral sector of the complex. The cofactor is [4Fe-4S] cluster.

It is found in the cell membrane. The enzyme catalyses a quinone + NADH + 5 H(+)(in) = a quinol + NAD(+) + 4 H(+)(out). In terms of biological role, NDH-1 shuttles electrons from NADH, via FMN and iron-sulfur (Fe-S) centers, to quinones in the respiratory chain. The immediate electron acceptor for the enzyme in this species is believed to be a menaquinone. Couples the redox reaction to proton translocation (for every two electrons transferred, four hydrogen ions are translocated across the cytoplasmic membrane), and thus conserves the redox energy in a proton gradient. The sequence is that of NADH-quinone oxidoreductase subunit B from Acidothermus cellulolyticus (strain ATCC 43068 / DSM 8971 / 11B).